The primary structure comprises 370 residues: NSFL1 cofactor p47 (370 aa).

Positions 54-73 (SQATPSSVSRGTAPSDNRVT) are disordered. Residues serine 74, serine 102, and serine 114 each carry the phosphoserine modification. Disordered stretches follow at residues 80–116 (HDQD…RSPN) and 137–157 (VTKS…GYRL). The Nuclear localization signal signature appears at 109 to 115 (PPRKRSP). Serine 140 bears the Phosphoserine; by CDK1 mark. Tyrosine 167 is modified (phosphotyrosine). A Nuclear localization signal motif is present at residues 172–175 (RRRH). Residues serine 176, serine 192, and serine 272 each carry the phosphoserine modification. Residues 179–244 (DVHVVLKLWK…MEDHRDEDFV (66 aa)) form the SEP domain. Residues 272–292 (SPAQQAENEAKASSSISIDES) are disordered. Residues 291–368 (ESQPTTNIQI…NLLNAVIVQR (78 aa)) enclose the UBX domain.

In terms of assembly, part of a ternary complex containing STX5A, NSFL1C and VCP. NSFL1C forms a homotrimer that binds to one end of a VCP homohexamer. The complex binds to membranes enriched in phosphatidylethanolamine-containing lipids and promotes Golgi membrane fusion. Interaction with VCIP135 leads to dissociation of the complex via ATP hydrolysis by VCP. Binds ubiquitin and mono-ubiquitinated proteins via its N-terminal UBA-like domain when bound to VCP. In terms of processing, phosphorylated during mitosis. Phosphorylation inhibits interaction with Golgi membranes and is required for the fragmentation of the Golgi stacks during mitosis.

It is found in the nucleus. The protein localises to the golgi apparatus. Its subcellular location is the golgi stack. The protein resides in the chromosome. It localises to the cytoplasm. It is found in the cytoskeleton. The protein localises to the microtubule organizing center. Its subcellular location is the centrosome. Reduces the ATPase activity of VCP. Necessary for the fragmentation of Golgi stacks during mitosis and for VCP-mediated reassembly of Golgi stacks after mitosis. May play a role in VCP-mediated formation of transitional endoplasmic reticulum (tER). Inhibits the activity of CTSL (in vitro). Together with UBXN2B/p37, regulates the centrosomal levels of kinase AURKA/Aurora A during mitotic progression by promoting AURKA removal from centrosomes in prophase. Also, regulates spindle orientation during mitosis. The chain is NSFL1 cofactor p47 (NSFL1C) from Bos taurus (Bovine).